The sequence spans 166 residues: Large ribosomal subunit protein uL10 (166 aa).

It belongs to the universal ribosomal protein uL10 family. As to quaternary structure, part of the ribosomal stalk of the 50S ribosomal subunit. The N-terminus interacts with L11 and the large rRNA to form the base of the stalk. The C-terminus forms an elongated spine to which L12 dimers bind in a sequential fashion forming a multimeric L10(L12)X complex.

Functionally, forms part of the ribosomal stalk, playing a central role in the interaction of the ribosome with GTP-bound translation factors. In Shewanella oneidensis (strain ATCC 700550 / JCM 31522 / CIP 106686 / LMG 19005 / NCIMB 14063 / MR-1), this protein is Large ribosomal subunit protein uL10.